The sequence spans 318 residues: Formimidoylglutamase (318 aa).

Positions 130, 155, 157, 159, 246, and 248 each coordinate Mn(2+).

It belongs to the arginase family. It depends on Mn(2+) as a cofactor.

It catalyses the reaction N-formimidoyl-L-glutamate + H2O = formamide + L-glutamate. The protein operates within amino-acid degradation; L-histidine degradation into L-glutamate; L-glutamate from N-formimidoyl-L-glutamate (hydrolase route): step 1/1. Catalyzes the conversion of N-formimidoyl-L-glutamate to L-glutamate and formamide. The chain is Formimidoylglutamase from Klebsiella pneumoniae subsp. pneumoniae (strain ATCC 700721 / MGH 78578).